Here is a 615-residue protein sequence, read N- to C-terminus: Peptidoglycan-binding protein YepA (615 aa).

The N-terminal stretch at Met-1–Ala-26 is a signal peptide.

Belongs to the bacterial solute-binding protein 5 family. As to quaternary structure, the complex is composed of one ATP-binding protein (YejF), two transmembrane proteins (YejB and YejE) and a solute-binding protein (YepA).

It localises to the periplasm. Its function is as follows. Part of the ABC transporter complex YejBEF-YepA involved in the uptake of muropeptides, the breakdown products of cell wall peptidoglycan. The import of muropeptides into the cell enables peptidoglycan recycling, which is vital for cell wall integrity in this bacterium. Probably binds muropeptides. The chain is Peptidoglycan-binding protein YepA from Agrobacterium fabrum (strain C58 / ATCC 33970) (Agrobacterium tumefaciens (strain C58)).